We begin with the raw amino-acid sequence, 425 residues long: Na(+)/H(+) antiporter NhaA 1 (425 aa).

A run of 11 helical transmembrane segments spans residues 20-40, 65-85, 102-122, 131-151, 160-180, 183-203, 218-238, 272-292, 303-323, 342-362, and 373-393; these read AGGVILMAVAVLAMIVANSPL, PHLWINDALMAVFFLLVGLEI, LPFIAALGGMAAPALVFLAVT, GWAIPAATDIAFAIGVMALLG, LFLTTVAIVDDMGAVVIIALA, ASIKGIALLAAAVILGAMMAM, FVLLWFAVLVSGVHATIAGVL, FLIVPLFGFANAGISLEGFSL, IAAGLFIGKQLGIFSLIWAAV, LSVLCGIGFTMSLFIGMLAFA, and LGVITGSLLSGVLGYLVLRFA.

The protein belongs to the NhaA Na(+)/H(+) (TC 2.A.33) antiporter family.

It localises to the cell inner membrane. It catalyses the reaction Na(+)(in) + 2 H(+)(out) = Na(+)(out) + 2 H(+)(in). Its function is as follows. Na(+)/H(+) antiporter that extrudes sodium in exchange for external protons. The chain is Na(+)/H(+) antiporter NhaA 1 from Novosphingobium aromaticivorans (strain ATCC 700278 / DSM 12444 / CCUG 56034 / CIP 105152 / NBRC 16084 / F199).